We begin with the raw amino-acid sequence, 291 residues long: Meteorin (291 aa).

Positions Met1–Ala21 are cleaved as a signal peptide. 5 disulfides stabilise this stretch: Cys28-Cys49, Cys80-Cys116, Cys169-Cys240, Cys172-Cys264, and Cys182-Cys286.

The protein belongs to the meteorin family. Monomer. In terms of tissue distribution, highly expressed in brain. Expressed in undifferentiated neural progenitors and in astrocyte lineage, particularly in Bergmann glia, a subtype of radial glia, and a few discrete neuronal populations residing in the superior colliculus, the ocular motor nucleus, the raphe and pontine nuclei, and in various thalamic nuclei. Weakly expressed in heart, kidney, skeletal muscle, spleen, testis, gut and lung.

It is found in the secreted. Its function is as follows. Involved in both glial cell differentiation and axonal network formation during neurogenesis. Promotes astrocyte differentiation and transforms cerebellar astrocytes into radial glia. Also induces axonal extension in small and intermediate neurons of sensory ganglia by activating nearby satellite glia. The protein is Meteorin (Metrn) of Mus musculus (Mouse).